The chain runs to 382 residues: Cytochrome b (382 aa).

The next 4 membrane-spanning stretches (helical) occupy residues 33-53 (FGSLLGLCLASQIVTGLFLAM), 77-98 (WLVRNMHANGASFFFICLYTHI), 113-133 (WTVGVILLLLTMMTAFVGYVL), and 178-198 (FFAFHFLLPFVIAAFTAIHLL). 2 residues coordinate heme b: His-83 and His-97. Positions 182 and 196 each coordinate heme b. Position 201 (His-201) interacts with a ubiquinone. The next 4 helical transmembrane spans lie at 226–246 (LKDLLGFTILILTLTSVALLT), 288–308 (LGGVLALLASVLILATVPFLQ), 320–340 (LTQLVFWTLIANIAILTWIGG), and 347–367 (FVSIGQLASLAYFSIFLIIIP).

This sequence belongs to the cytochrome b family. As to quaternary structure, the cytochrome bc1 complex contains 3 respiratory subunits (MT-CYB, CYC1 and UQCRFS1), 2 core proteins (UQCRC1 and UQCRC2) and probably 6 low-molecular weight proteins. Requires heme b as cofactor.

Its subcellular location is the mitochondrion inner membrane. Component of the ubiquinol-cytochrome c reductase complex (complex III or cytochrome b-c1 complex) that is part of the mitochondrial respiratory chain. The b-c1 complex mediates electron transfer from ubiquinol to cytochrome c. Contributes to the generation of a proton gradient across the mitochondrial membrane that is then used for ATP synthesis. The polypeptide is Cytochrome b (mt-cyb) (Sigmops gracilis (Slender fangjaw)).